A 142-amino-acid chain; its full sequence is Large ribosomal subunit protein mL42 (142 aa).

The transit peptide at 1–31 (MAAAVKWAISNRTIWKHLLPIQNGALSSACH) directs the protein to the mitochondrion.

It belongs to the mitochondrion-specific ribosomal protein mL42 family. As to quaternary structure, component of the mitochondrial ribosome large subunit (39S) which comprises a 16S rRNA and about 50 distinct proteins. Component of the mitochondrial ribosome small subunit (28S) which comprises a 12S rRNA and about 30 distinct proteins.

The protein resides in the mitochondrion. The sequence is that of Large ribosomal subunit protein mL42 (Mrpl42) from Mus musculus (Mouse).